We begin with the raw amino-acid sequence, 292 residues long: Aspartate carbamoyltransferase catalytic subunit (292 aa).

Residues R49 and T50 each contribute to the carbamoyl phosphate site. K77 provides a ligand contact to L-aspartate. Positions 99, 127, and 130 each coordinate carbamoyl phosphate. L-aspartate-binding residues include R161 and R211. The carbamoyl phosphate site is built by G250 and P251.

This sequence belongs to the aspartate/ornithine carbamoyltransferase superfamily. ATCase family. As to quaternary structure, heterododecamer (2C3:3R2) of six catalytic PyrB chains organized as two trimers (C3), and six regulatory PyrI chains organized as three dimers (R2).

It carries out the reaction carbamoyl phosphate + L-aspartate = N-carbamoyl-L-aspartate + phosphate + H(+). It participates in pyrimidine metabolism; UMP biosynthesis via de novo pathway; (S)-dihydroorotate from bicarbonate: step 2/3. Catalyzes the condensation of carbamoyl phosphate and aspartate to form carbamoyl aspartate and inorganic phosphate, the committed step in the de novo pyrimidine nucleotide biosynthesis pathway. In Campylobacter lari (strain RM2100 / D67 / ATCC BAA-1060), this protein is Aspartate carbamoyltransferase catalytic subunit.